The chain runs to 2779 residues: Protein lava lamp (2779 aa).

3 disordered regions span residues 31–62, 79–98, and 110–135; these read LAGS…DSLK, ALRK…SMES, and KTRS…VSLL. The segment covering 33–51 has biased composition (polar residues); sequence GSSNDLSSLQNVSASTTRG. Phosphoserine is present on residues serine 34 and serine 35. A coiled-coil region spans residues 52–85; that stretch reads TKGKGRLDSLKENLYKQQERLTALKERALRKSQD. Positions 79–91 are enriched in basic and acidic residues; the sequence is ALRKSQDERHKSS. 4 positions are modified to phosphoserine: serine 95, serine 98, serine 122, and serine 133. Residues 141 to 175 are a coiled coil; sequence EKLLMLTQRTEQNRALLEQRKRDLAKSLLSVKSNI. Phosphoserine is present on residues serine 186, serine 352, and serine 354. 2 coiled-coil regions span residues 220-607 and 659-716; these read ESRV…AESI and GETL…KDLI. Residues 337–352 are compositionally biased toward basic and acidic residues; sequence ERQRNLELEQEQEKAS. Disordered regions lie at residues 337-366, 622-662, 711-730, and 1716-1753; these read ERQR…DAQV, RPAS…GETL, REKD…QELS, and QAQL…GGDA. 2 stretches are compositionally biased toward low complexity: residues 717–730 and 1716–1740; these read SSTS…QELS and QAQL…QSQQ. Coiled-coil stretches lie at residues 751 to 1733, 1785 to 1863, and 1941 to 2433; these read LFEK…QHHH, TIED…KLIQ, and NEAP…QSQN. Disordered regions lie at residues 2348 to 2367, 2484 to 2507, 2552 to 2578, and 2633 to 2665; these read EDKE…GETV, EEVT…EATS, NRGG…TANE, and TERS…AGSN. Positions 2488-2502 are enriched in low complexity; sequence QQQQRELPQSQQSTQ. A coiled-coil region spans residues 2504 to 2544; sequence EATSDIMQKMQKALETQEMEIVTLKEQLAIRSAEYARLAAQ. A coiled-coil region spans residues 2600 to 2641; the sequence is DMRVEEMIVELVQLLEERDHLQLKLSDTLRQLETERSRVSDE. Residues 2643-2665 are compositionally biased toward low complexity; sequence SATASSSAASSSSPSKISSAGSN.

As to quaternary structure, interacts with CLIP-190 and spectrin separately.

The protein localises to the golgi apparatus. Its subcellular location is the cytoplasmic vesicle. It is found in the autophagosome. Functionally, lva and spectrin may form a Golgi-based scaffold that mediates interaction of Golgi bodies with microtubules and facilitates Golgi-derived membrane secretion required for the formation of furrows during cellularization. Under starvation conditions recruited by ema to developing autophagsosomes where it may function in autophagosome growth. This is Protein lava lamp (lva) from Drosophila melanogaster (Fruit fly).